The chain runs to 377 residues: Mucin-7 (377 aa).

An N-terminal signal peptide occupies residues 1–22 (MKTLPLFVCICALSACFSFSEG). Positions 70–100 (CRPKLPPSPNNPPKFPNPHQPPKHPDKNSSV) are disordered. A compositionally biased stretch (pro residues) spans 73 to 89 (KLPPSPNNPPKFPNPHQ). N-linked (GlcNAc...) asparagine glycosylation is found at Asn97, Asn128, Asn135, and Asn146. The tract at residues 150-355 (SVATLAPVNS…QPTSAPGQNK (206 aa)) is disordered. 6 tandem repeats follow at residues 165 to 187 (TTAA…APPE), 188 to 210 (TTAA…APPE), 211 to 233 (TTAA…APPE), 234 to 256 (TTAA…APPE), 257 to 279 (TTAV…APPE), and 280 to 302 (TTAA…APQE). Pro residues predominate over residues 169 to 183 (PPTPSATTPAPPSSS). Residue Thr176 is glycosylated (O-linked (GalNAc) threonine; by GALNT13). O-linked (GalNAc) serine; by GALNT13 glycosylation is found at Ser182 and Ser183. Residues 184–214 (APPETTAAPPTPSATTQAPPSSSAPPETTAA) are compositionally biased toward low complexity. Thr188 and Thr189 each carry an O-linked (GalNAc) threonine; by GALNT13 glycan. The span at 215-229 (PPTPPATTPAPPSSS) shows a compositional bias: pro residues. Positions 230-283 (APPETTAAPPTPSATTPAPLSSSAPPETTAVPPTPSATTLDPSSASAPPETTAA) are enriched in low complexity. The segment covering 284 to 298 (PPTPSATTPAPPSSP) has biased composition (pro residues). A compositionally biased stretch (polar residues) spans 309–329 (TTPNSSPTTLAPDTSETSAAP). Positions 330–348 (THQTTTSVTTQTTTTKQPT) are enriched in low complexity.

Monomer. N- and O-glycosylated. Contains fucose, mannose, galactose, N-acetylglucosamine and N-acetylgalactosamine. In terms of tissue distribution, expressed in salivary gland tissues and only in those that contain mucous acinar cells (e.g. sublingual and submandibular glands) and not in salivary glands containing only serous acinar cells (e.g. parotid gland).

It is found in the secreted. Its function is as follows. May function in a protective capacity by promoting the clearance of bacteria in the oral cavity and aiding in mastication, speech, and swallowing. Binds P.aeruginosa pili. This is Mucin-7 (MUC7) from Homo sapiens (Human).